The sequence spans 174 residues: Neuromedin-U (174 aa).

The signal sequence occupies residues 1 to 37 (MSRAAGHRPGLSAGQLAAATASPLLSLLLLLACCADA). Residues 38 to 105 (CKGVPISPQR…EQSEKDNTKR (68 aa)) constitute a propeptide that is removed on maturation. The residue at position 141 (Met141) is a Methionine sulfoxide; partial. At Asn166 the chain carries Asparagine amide. A propeptide spanning residues 170 to 174 (STSFI) is cleaved from the precursor.

This sequence belongs to the NmU family.

It localises to the secreted. Ligand for receptors NMUR1 and NMUR2. Stimulates muscle contractions of specific regions of the gastrointestinal tract. Its function is as follows. Does not function as a ligand for either NMUR1 or NMUR2. Indirectly induces prolactin release although its potency is much lower than that of neuromedin precursor-related peptide 36. Functionally, does not function as a ligand for either NMUR1 or NMUR2. Indirectly induces prolactin release from lactotroph cells in the pituitary gland, probably via the hypothalamic dopaminergic system. In terms of biological role, stimulates muscle contractions of specific regions of the gastrointestinal tract. This is Neuromedin-U (Nmu) from Mus musculus (Mouse).